The primary structure comprises 351 residues: Hydroxymethylglutaryl-CoA synthase (351 aa).

Residue Asp28 coordinates (3S)-3-hydroxy-3-methylglutaryl-CoA. Glu80 functions as the Proton donor/acceptor in the catalytic mechanism. (3S)-3-hydroxy-3-methylglutaryl-CoA is bound by residues Cys112 and Thr153. Cys112 acts as the Acyl-thioester intermediate in catalysis. CoA is bound at residue Arg199. (3S)-3-hydroxy-3-methylglutaryl-CoA-binding residues include Thr201 and His234. Residue His234 is the Proton donor/acceptor of the active site. Lys239 contacts CoA. Residues Arg243, Asn266, and Ser296 each contribute to the (3S)-3-hydroxy-3-methylglutaryl-CoA site.

Belongs to the thiolase-like superfamily. Archaeal HMG-CoA synthase family. In terms of assembly, interacts with acetoacetyl-CoA thiolase that catalyzes the precedent step in the pathway and with a DUF35 protein. The acetoacetyl-CoA thiolase/HMG-CoA synthase complex channels the intermediate via a fused CoA-binding site, which allows for efficient coupling of the endergonic thiolase reaction with the exergonic HMGCS reaction.

It carries out the reaction acetoacetyl-CoA + acetyl-CoA + H2O = (3S)-3-hydroxy-3-methylglutaryl-CoA + CoA + H(+). It participates in metabolic intermediate biosynthesis; (R)-mevalonate biosynthesis; (R)-mevalonate from acetyl-CoA: step 2/3. Its function is as follows. Catalyzes the condensation of acetyl-CoA with acetoacetyl-CoA to form 3-hydroxy-3-methylglutaryl-CoA (HMG-CoA). Functions in the mevalonate (MVA) pathway leading to isopentenyl diphosphate (IPP), a key precursor for the biosynthesis of isoprenoid compounds that are building blocks of archaeal membrane lipids. This Picrophilus torridus (strain ATCC 700027 / DSM 9790 / JCM 10055 / NBRC 100828 / KAW 2/3) protein is Hydroxymethylglutaryl-CoA synthase.